Reading from the N-terminus, the 150-residue chain is Arginine repressor (150 aa).

It belongs to the ArgR family.

The protein resides in the cytoplasm. It functions in the pathway amino-acid biosynthesis; L-arginine biosynthesis [regulation]. Its function is as follows. Regulates arginine biosynthesis genes. The protein is Arginine repressor of Ruminiclostridium cellulolyticum (strain ATCC 35319 / DSM 5812 / JCM 6584 / H10) (Clostridium cellulolyticum).